Here is a 363-residue protein sequence, read N- to C-terminus: NAD(P)H-quinone oxidoreductase subunit 1, chloroplastic (363 aa).

The next 9 membrane-spanning stretches (helical) occupy residues 30–50, 98–118, 129–149, 165–185, 203–223, 248–268, 269–289, 300–320, and 334–354; these read LVPILSLVLGITLGVLVIVWL, FSIGPSIAVISILLSYSVIPF, IGVFLWIAVSSIAPIGLLMSG, AAQSISYEIPLTLCLLSISLL, LWGWNLWRQPIGFLVFLISSL, YSGIKFGLFYVASYLNLLVSS, LFVTVLYLGGWNISISYIFVP, VFGTTIGIFTTLAKTYLFLFI, and DQLLNLGWKFLLPISLGNLLL.

This sequence belongs to the complex I subunit 1 family. NDH is composed of at least 16 different subunits, 5 of which are encoded in the nucleus.

It localises to the plastid. The protein resides in the chloroplast thylakoid membrane. It catalyses the reaction a plastoquinone + NADH + (n+1) H(+)(in) = a plastoquinol + NAD(+) + n H(+)(out). The catalysed reaction is a plastoquinone + NADPH + (n+1) H(+)(in) = a plastoquinol + NADP(+) + n H(+)(out). In terms of biological role, NDH shuttles electrons from NAD(P)H:plastoquinone, via FMN and iron-sulfur (Fe-S) centers, to quinones in the photosynthetic chain and possibly in a chloroplast respiratory chain. The immediate electron acceptor for the enzyme in this species is believed to be plastoquinone. Couples the redox reaction to proton translocation, and thus conserves the redox energy in a proton gradient. This chain is NAD(P)H-quinone oxidoreductase subunit 1, chloroplastic, found in Oenothera elata subsp. hookeri (Hooker's evening primrose).